Reading from the N-terminus, the 642-residue chain is Ribosome biogenesis protein BOP1 homolog (642 aa).

The interval 1 to 28 (MIHKRMNSTELERTSKKIDDYDSSDEED) is disordered. Residues 10–20 (ELERTSKKIDD) show a composition bias toward basic and acidic residues. 6 WD repeats span residues 311 to 351 (GHSG…CLKT), 353 to 393 (SLDG…DRHR), 472 to 510 (RLKGLMTVLSFHPSEPFLFVGTQRYIRIYDLAKCQLKKK), 513 to 552 (TGSQWMSCMHVDFRGDNVFVGGHDRVFSWIDLQLSSKPWK), 556 to 595 (HHTAAIRGVTQHARCPLIATVSDDSTAIVYYARISSDSLK), and 612 to 642 (KNGLSILAAIFHPSQPWLITAHVDGSIALFT).

Belongs to the WD repeat BOP1/ERB1 family.

The protein resides in the nucleus. The protein localises to the nucleolus. It is found in the nucleoplasm. Functionally, required for maturation of ribosomal RNAs and formation of the large ribosomal subunit. The polypeptide is Ribosome biogenesis protein BOP1 homolog (Brugia malayi (Filarial nematode worm)).